The following is a 548-amino-acid chain: Glucose-6-phosphate isomerase 1 (548 aa).

The active-site Proton donor is the E353. Catalysis depends on residues H384 and K512.

The protein belongs to the GPI family.

The protein resides in the cytoplasm. The enzyme catalyses alpha-D-glucose 6-phosphate = beta-D-fructose 6-phosphate. It functions in the pathway carbohydrate biosynthesis; gluconeogenesis. It participates in carbohydrate degradation; glycolysis; D-glyceraldehyde 3-phosphate and glycerone phosphate from D-glucose: step 2/4. In terms of biological role, catalyzes the reversible isomerization of glucose-6-phosphate to fructose-6-phosphate. This Neisseria meningitidis serogroup A / serotype 4A (strain DSM 15465 / Z2491) protein is Glucose-6-phosphate isomerase 1.